The primary structure comprises 124 residues: Protein RibT (124 aa).

Positions 3-124 (IRYKKSFEKI…QQDQDISYNN (122 aa)) constitute an N-acetyltransferase domain.

Its function is as follows. Involved in riboflavin biosynthesis. The polypeptide is Protein RibT (ribT) (Bacillus subtilis (strain 168)).